A 352-amino-acid chain; its full sequence is Small ribosomal subunit biogenesis GTPase RsgA 1 (352 aa).

The segment at 1-24 is disordered; it reads MAKKKKLTQGQVRRVRDNQQKRLK. A CP-type G domain is found at 104–272; the sequence is TSVLTRPDYY…LIDSPGVREF (169 aa). GTP-binding positions include 160-163 and 214-222; these read NKID and GQSGVGKSS. 4 residues coordinate Zn(2+): C296, C301, H303, and C309.

This sequence belongs to the TRAFAC class YlqF/YawG GTPase family. RsgA subfamily. Monomer. Associates with 30S ribosomal subunit, binds 16S rRNA. The cofactor is Zn(2+).

The protein localises to the cytoplasm. In terms of biological role, one of several proteins that assist in the late maturation steps of the functional core of the 30S ribosomal subunit. Helps release RbfA from mature subunits. May play a role in the assembly of ribosomal proteins into the subunit. Circularly permuted GTPase that catalyzes slow GTP hydrolysis, GTPase activity is stimulated by the 30S ribosomal subunit. This Vibrio vulnificus (strain CMCP6) protein is Small ribosomal subunit biogenesis GTPase RsgA 1.